The sequence spans 59 residues: Large ribosomal subunit protein uL30 (59 aa).

The protein belongs to the universal ribosomal protein uL30 family. In terms of assembly, part of the 50S ribosomal subunit.

This chain is Large ribosomal subunit protein uL30, found in Herminiimonas arsenicoxydans.